A 124-amino-acid chain; its full sequence is Small ribosomal subunit protein uS12 (124 aa).

The disordered stretch occupies residues 1–25 (MPTINQLIRKPRKSQKEKTASPALQ). At Asp-89 the chain carries 3-methylthioaspartic acid.

It belongs to the universal ribosomal protein uS12 family. Part of the 30S ribosomal subunit. Contacts proteins S8 and S17. May interact with IF1 in the 30S initiation complex.

With S4 and S5 plays an important role in translational accuracy. Functionally, interacts with and stabilizes bases of the 16S rRNA that are involved in tRNA selection in the A site and with the mRNA backbone. Located at the interface of the 30S and 50S subunits, it traverses the body of the 30S subunit contacting proteins on the other side and probably holding the rRNA structure together. The combined cluster of proteins S8, S12 and S17 appears to hold together the shoulder and platform of the 30S subunit. The protein is Small ribosomal subunit protein uS12 of Borrelia duttonii (strain Ly).